The chain runs to 122 residues: Large ribosomal subunit protein uL14 (122 aa).

The protein belongs to the universal ribosomal protein uL14 family. In terms of assembly, part of the 50S ribosomal subunit. Forms a cluster with proteins L3 and L19. In the 70S ribosome, L14 and L19 interact and together make contacts with the 16S rRNA in bridges B5 and B8.

Binds to 23S rRNA. Forms part of two intersubunit bridges in the 70S ribosome. The chain is Large ribosomal subunit protein uL14 from Bordetella parapertussis (strain 12822 / ATCC BAA-587 / NCTC 13253).